Reading from the N-terminus, the 395-residue chain is Acid ceramidase (395 aa).

An N-terminal signal peptide occupies residues 1–21; it reads MLGRSRLTFVLLSVTVTCSVA. An intrachain disulfide couples cysteine 31 to cysteine 340. Catalysis depends on cysteine 143, which acts as the Nucleophile. 4 N-linked (GlcNAc...) asparagine glycosylation sites follow: asparagine 173, asparagine 259, asparagine 342, and asparagine 348. Cysteine 388 and cysteine 392 are oxidised to a cystine.

The protein belongs to the acid ceramidase family. Heterodimer; disulfide-linked. The heterodimer is composed of the disulfide-linked alpha and beta chains produced by autocatalytic cleavage of the precursor. N-glycosylated. Post-translationally, proteolytically cleaved into two chains alpha and beta that remain associated via a disulfide bond. Cleavage gives rise to a conformation change that activates the enzyme. The same catalytic Cys residue mediates the autoproteolytic cleavage and subsequent hydrolysis of lipid substrates. The beta chain may undergo an additional C-terminal processing.

It is found in the lysosome. The protein resides in the secreted. It carries out the reaction an N-acylsphing-4-enine + H2O = sphing-4-enine + a fatty acid. It catalyses the reaction N-dodecanoylsphing-4-enine + H2O = dodecanoate + sphing-4-enine. The catalysed reaction is N-tetradecanoylsphing-4-enine + H2O = tetradecanoate + sphing-4-enine. The enzyme catalyses N-hexadecanoylsphing-4-enine + H2O = sphing-4-enine + hexadecanoate. It carries out the reaction N-octadecanoylsphing-4-enine + H2O = sphing-4-enine + octadecanoate. It catalyses the reaction N-dodecanoyl-(4R)-hydroxysphinganine + H2O = (4R)-hydroxysphinganine + dodecanoate. The catalysed reaction is N-(dodecanoyl)-sphinganine + H2O = dodecanoate + sphinganine. The enzyme catalyses N-(acetyl)-sphing-4-enine + H2O = sphing-4-enine + acetate. It carries out the reaction N-(hexanoyl)sphing-4-enine + H2O = hexanoate + sphing-4-enine. It catalyses the reaction N-octanoylsphing-4-enine + H2O = octanoate + sphing-4-enine. The catalysed reaction is N-(9Z-octadecenoyl)-sphing-4-enine + H2O = sphing-4-enine + (9Z)-octadecenoate. The enzyme catalyses N-dodecanoylethanolamine + H2O = dodecanoate + ethanolamine. It participates in lipid metabolism; sphingolipid metabolism. In terms of biological role, lysosomal ceramidase that hydrolyzes sphingolipid ceramides into sphingosine and free fatty acids at acidic pH. Ceramides, sphingosine, and its phosphorylated form sphingosine-1-phosphate are bioactive lipids that mediate cellular signaling pathways regulating several biological processes including cell proliferation, apoptosis and differentiation. Has a higher catalytic efficiency towards C12-ceramides versus other ceramides. Also catalyzes the reverse reaction allowing the synthesis of ceramides from fatty acids and sphingosine. For the reverse synthetic reaction, the natural sphingosine D-erythro isomer is more efficiently utilized as a substrate compared to D-erythro-dihydrosphingosine and D-erythro-phytosphingosine, while the fatty acids with chain lengths of 12 or 14 carbons are the most efficiently used. Also has an N-acylethanolamine hydrolase activity. By regulating the levels of ceramides, sphingosine and sphingosine-1-phosphate in the epidermis, mediates the calcium-induced differentiation of epidermal keratinocytes. Also indirectly regulates tumor necrosis factor/TNF-induced apoptosis. By regulating the intracellular balance between ceramides and sphingosine, in adrenocortical cells, probably also acts as a regulator of steroidogenesis. The protein is Acid ceramidase of Balaenoptera acutorostrata scammoni (North Pacific minke whale).